The sequence spans 437 residues: Trigger factor (437 aa).

One can recognise a PPIase FKBP-type domain in the interval 174-260; it reads GDFVQISFEG…VKSLKKKIFP (87 aa).

Belongs to the FKBP-type PPIase family. Tig subfamily.

The protein resides in the cytoplasm. The catalysed reaction is [protein]-peptidylproline (omega=180) = [protein]-peptidylproline (omega=0). Involved in protein export. Acts as a chaperone by maintaining the newly synthesized protein in an open conformation. Functions as a peptidyl-prolyl cis-trans isomerase. The polypeptide is Trigger factor (Koribacter versatilis (strain Ellin345)).